Reading from the N-terminus, the 501-residue chain is UPF0371 protein CD630_08980 (501 aa).

The protein belongs to the UPF0371 family.

This is UPF0371 protein CD630_08980 from Clostridioides difficile (strain 630) (Peptoclostridium difficile).